The primary structure comprises 294 residues: Protoheme IX farnesyltransferase (294 aa).

Helical transmembrane passes span valine 24–valine 44, leucine 48–histidine 68, alanine 96–asparagine 116, leucine 118–leucine 138, isoleucine 146–glycine 166, alanine 172–isoleucine 192, valine 224–leucine 244, leucine 245–aspartate 265, and valine 268–leucine 288.

This sequence belongs to the UbiA prenyltransferase family. Protoheme IX farnesyltransferase subfamily.

The protein localises to the cell inner membrane. The enzyme catalyses heme b + (2E,6E)-farnesyl diphosphate + H2O = Fe(II)-heme o + diphosphate. The protein operates within porphyrin-containing compound metabolism; heme O biosynthesis; heme O from protoheme: step 1/1. Converts heme B (protoheme IX) to heme O by substitution of the vinyl group on carbon 2 of heme B porphyrin ring with a hydroxyethyl farnesyl side group. The sequence is that of Protoheme IX farnesyltransferase from Legionella pneumophila (strain Paris).